A 289-amino-acid polypeptide reads, in one-letter code: Acetyl-coenzyme A carboxylase carboxyl transferase subunit beta 2 (289 aa).

The CoA carboxyltransferase N-terminal domain occupies 25 to 289; it reads VWTKCPSCEQ…TNKSIQPEAE (265 aa). Zn(2+)-binding residues include cysteine 29, cysteine 32, cysteine 48, and cysteine 51. The C4-type zinc-finger motif lies at 29–51; that stretch reads CPSCEQVLYRIALKENLEVCPKC.

This sequence belongs to the AccD/PCCB family. As to quaternary structure, acetyl-CoA carboxylase is a heterohexamer composed of biotin carboxyl carrier protein (AccB), biotin carboxylase (AccC) and two subunits each of ACCase subunit alpha (AccA) and ACCase subunit beta (AccD). Zn(2+) serves as cofactor.

Its subcellular location is the cytoplasm. The enzyme catalyses N(6)-carboxybiotinyl-L-lysyl-[protein] + acetyl-CoA = N(6)-biotinyl-L-lysyl-[protein] + malonyl-CoA. Its pathway is lipid metabolism; malonyl-CoA biosynthesis; malonyl-CoA from acetyl-CoA: step 1/1. Its function is as follows. Component of the acetyl coenzyme A carboxylase (ACC) complex. Biotin carboxylase (BC) catalyzes the carboxylation of biotin on its carrier protein (BCCP) and then the CO(2) group is transferred by the transcarboxylase to acetyl-CoA to form malonyl-CoA. The sequence is that of Acetyl-coenzyme A carboxylase carboxyl transferase subunit beta 2 from Vibrio campbellii (strain ATCC BAA-1116).